The sequence spans 354 residues: MKFLDQCKIYVRSGNGGGGAVSFRREKYIEYGGPDGGDGGRGGDVWIEAVEGLNTLIDYRYQQHFKAGTGVHGMGRGRHGAAGDDVLLKVPVGTQVLEEDKETLIADLDTAGMTLRLAKGGNGGWGNLHFKGPVNQAPKYANPGQDGEELWVWLRLKLIADVGLVGLPNAGKSTFLAAATAARPKIADYPFTTLTPNLGVVDLSTSERFVLADIPGLIEGASEGAGLGTRFLGHVERSAVLIHLVDATQDDIAGAWTTIRGELEAYGDELADKSEILALNKVDALDPETRKAKAAELQAVSGIKPMLVSGVSGEGVTELLRAAFTQVRIRRGETPAEAAIDEAPEEETPGGWQP.

The 159-residue stretch at methionine 1–isoleucine 159 folds into the Obg domain. In terms of domain architecture, OBG-type G spans alanine 160 to arginine 328. GTP contacts are provided by residues glycine 166 to serine 173, phenylalanine 191 to threonine 195, aspartate 213 to glycine 216, asparagine 280 to aspartate 283, and serine 309 to valine 311. The Mg(2+) site is built by serine 173 and threonine 193. The tract at residues glutamate 333 to proline 354 is disordered. Acidic residues predominate over residues alanine 339–threonine 348.

The protein belongs to the TRAFAC class OBG-HflX-like GTPase superfamily. OBG GTPase family. In terms of assembly, monomer. It depends on Mg(2+) as a cofactor.

Its subcellular location is the cytoplasm. An essential GTPase which binds GTP, GDP and possibly (p)ppGpp with moderate affinity, with high nucleotide exchange rates and a fairly low GTP hydrolysis rate. Plays a role in control of the cell cycle, stress response, ribosome biogenesis and in those bacteria that undergo differentiation, in morphogenesis control. This is GTPase Obg from Caulobacter sp. (strain K31).